The chain runs to 136 residues: Small ribosomal subunit protein uS12 (136 aa).

Aspartate 89 carries the 3-methylthioaspartic acid modification. The disordered stretch occupies residues 104–136 (TAGVNGRTQRRSKYGAKRPKPGQAAAAAKGKKK). Residues 111-123 (TQRRSKYGAKRPK) show a composition bias toward basic residues. Residues 124-136 (PGQAAAAAKGKKK) are compositionally biased toward low complexity.

Belongs to the universal ribosomal protein uS12 family. Part of the 30S ribosomal subunit. Contacts proteins S8 and S17. May interact with IF1 in the 30S initiation complex.

In terms of biological role, with S4 and S5 plays an important role in translational accuracy. Functionally, interacts with and stabilizes bases of the 16S rRNA that are involved in tRNA selection in the A site and with the mRNA backbone. Located at the interface of the 30S and 50S subunits, it traverses the body of the 30S subunit contacting proteins on the other side and probably holding the rRNA structure together. The combined cluster of proteins S8, S12 and S17 appears to hold together the shoulder and platform of the 30S subunit. In Parabacteroides distasonis (strain ATCC 8503 / DSM 20701 / CIP 104284 / JCM 5825 / NCTC 11152), this protein is Small ribosomal subunit protein uS12.